The primary structure comprises 206 residues: MTTPTFDTIEAQASYGIGLQVGQQLSESGLEGLLPEALVAGIADALEGKHPAVPVDVVHRALREIHERADAVRRQRFQAMAAEGVKYLEENAKKEGVNSTESGLQFRVINQGEGAIPARTDRVRVHYTGKLIDGTVFDSSVARGEPAEFPVNGVIPGWIEALTLMPVGSKWELTIPQELAYGERGAGASIPPFSTLVFEVELLEIL.

The PPIase FKBP-type domain maps to 120-206 (TDRVRVHYTG…VFEVELLEIL (87 aa)).

As to quaternary structure, homodimer.

The protein resides in the cytoplasm. It is found in the periplasm. The enzyme catalyses [protein]-peptidylproline (omega=180) = [protein]-peptidylproline (omega=0). With respect to regulation, strongly inhibited by FK506. PPIases accelerate the folding of proteins. Catalyzes the cis-trans isomerization of proline imidic peptide bonds in oligopeptides. Displays a preference for substrates with a lysyl residue in the P1 position. This chain is FKBP-type 22 kDa peptidyl-prolyl cis-trans isomerase (fklB), found in Escherichia coli (strain K12).